Reading from the N-terminus, the 273-residue chain is Ribosomal RNA small subunit methyltransferase A (273 aa).

Positions 19, 21, 46, 71, 94, and 117 each coordinate S-adenosyl-L-methionine.

This sequence belongs to the class I-like SAM-binding methyltransferase superfamily. rRNA adenine N(6)-methyltransferase family. RsmA subfamily.

It is found in the cytoplasm. The catalysed reaction is adenosine(1518)/adenosine(1519) in 16S rRNA + 4 S-adenosyl-L-methionine = N(6)-dimethyladenosine(1518)/N(6)-dimethyladenosine(1519) in 16S rRNA + 4 S-adenosyl-L-homocysteine + 4 H(+). Specifically dimethylates two adjacent adenosines (A1518 and A1519) in the loop of a conserved hairpin near the 3'-end of 16S rRNA in the 30S particle. May play a critical role in biogenesis of 30S subunits. The polypeptide is Ribosomal RNA small subunit methyltransferase A (Burkholderia ambifaria (strain MC40-6)).